A 419-amino-acid chain; its full sequence is Histidine--tRNA ligase (419 aa).

This sequence belongs to the class-II aminoacyl-tRNA synthetase family. As to quaternary structure, homodimer.

The protein localises to the cytoplasm. It catalyses the reaction tRNA(His) + L-histidine + ATP = L-histidyl-tRNA(His) + AMP + diphosphate + H(+). The sequence is that of Histidine--tRNA ligase from Novosphingobium aromaticivorans (strain ATCC 700278 / DSM 12444 / CCUG 56034 / CIP 105152 / NBRC 16084 / F199).